The sequence spans 224 residues: 7-cyano-7-deazaguanine synthase (224 aa).

An ATP-binding site is contributed by 12 to 22 (LSGGLDSSTVT). Residues Cys193, Cys201, Cys204, and Cys207 each coordinate Zn(2+).

This sequence belongs to the QueC family. It depends on Zn(2+) as a cofactor.

It catalyses the reaction 7-carboxy-7-deazaguanine + NH4(+) + ATP = 7-cyano-7-deazaguanine + ADP + phosphate + H2O + H(+). The protein operates within purine metabolism; 7-cyano-7-deazaguanine biosynthesis. In terms of biological role, catalyzes the ATP-dependent conversion of 7-carboxy-7-deazaguanine (CDG) to 7-cyano-7-deazaguanine (preQ(0)). The polypeptide is 7-cyano-7-deazaguanine synthase (Prochlorococcus marinus (strain MIT 9301)).